The chain runs to 207 residues: Urease accessory protein UreE (207 aa).

Residues 170 to 194 (EHHGHSHSHSHDHDHDHDHDHDHQH) show a composition bias toward basic and acidic residues. The tract at residues 170-207 (EHHGHSHSHSHDHDHDHDHDHDHQHGPCCSHGHHHGHR) is disordered.

The protein belongs to the UreE family.

Its subcellular location is the cytoplasm. Involved in urease metallocenter assembly. Binds nickel. Probably functions as a nickel donor during metallocenter assembly. The polypeptide is Urease accessory protein UreE (Burkholderia pseudomallei (strain 1106a)).